Here is a 623-residue protein sequence, read N- to C-terminus: Sterol O-acyltransferase 1 (623 aa).

The disordered stretch occupies residues 20–99; the sequence is NSAEPSKRHS…EQAEEKYPVD (80 aa). Low complexity predominate over residues 57–72; sequence ATTTATGVAVAAAAAA. Over residues 83–92 the composition is skewed to acidic residues; the sequence is DGDDEQDEQA. 5 helical membrane-spanning segments follow: residues 195 to 215, 242 to 262, 277 to 297, 384 to 404, and 422 to 442; these read LESNFSGIYVFAWMFMGWIAF, LFTIALLDLALFLSTFFVVFV, GFVAVSLFELCFIPVSFPVYV, ISCSNYFMFCMFPVLVYQINY, and IMGTIFLMMVTAQIFMHPVAM. The FYXDWWN motif motif lies at 504-510; sequence FYGDWWN. 2 consecutive transmembrane segments (helical) span residues 548–568 and 603–623; these read ATLFTFLLSAVFHEIAMFAIF and VVFTFGVCTGPSMIMTLYLTL. His560 is an active-site residue.

It belongs to the membrane-bound acyltransferase family. Sterol o-acyltransferase subfamily.

It localises to the endoplasmic reticulum membrane. In terms of biological role, sterol O-acyltransferase that catalyzes the formation of stery esters. This is Sterol O-acyltransferase 1 (ARE1) from Saccharomyces uvarum (strain ATCC 76518 / CBS 7001 / CLIB 283 / NBRC 10550 / MCYC 623 / NCYC 2669 / NRRL Y-11845) (Yeast).